The primary structure comprises 252 residues: tRNA pseudouridine synthase A (252 aa).

Asp52 acts as the Nucleophile in catalysis. Tyr110 is a substrate binding site.

This sequence belongs to the tRNA pseudouridine synthase TruA family. As to quaternary structure, homodimer.

The enzyme catalyses uridine(38/39/40) in tRNA = pseudouridine(38/39/40) in tRNA. In terms of biological role, formation of pseudouridine at positions 38, 39 and 40 in the anticodon stem and loop of transfer RNAs. The protein is tRNA pseudouridine synthase A of Syntrophotalea carbinolica (strain DSM 2380 / NBRC 103641 / GraBd1) (Pelobacter carbinolicus).